Reading from the N-terminus, the 72-residue chain is Large ribosomal subunit protein bL31 (72 aa).

Zn(2+)-binding residues include Cys-16, Cys-18, Cys-38, and Cys-41.

It belongs to the bacterial ribosomal protein bL31 family. Type A subfamily. As to quaternary structure, part of the 50S ribosomal subunit. It depends on Zn(2+) as a cofactor.

Its function is as follows. Binds the 23S rRNA. This Beutenbergia cavernae (strain ATCC BAA-8 / DSM 12333 / CCUG 43141 / JCM 11478 / NBRC 16432 / NCIMB 13614 / HKI 0122) protein is Large ribosomal subunit protein bL31.